The following is a 272-amino-acid chain: Merozoite surface protein 2 (272 aa).

Residues 1 to 20 form the signal peptide; that stretch reads MKVIKTLSIINFFIFVTFNI. N-linked (GlcNAc...) asparagine glycosylation is found at Asn-22 and Asn-36. The interval 44 to 198 is polymorphic region; that stretch reads AESKPSTGAG…EQTESPELQS (155 aa). Positions 45-233 are disordered; that stretch reads ESKPSTGAGG…DSQKECTDGN (189 aa). Over residues 51-82 the composition is skewed to gly residues; it reads GAGGSAGGSAGGSAGGSAGGSAGGSAGSGDGN. Tandem repeats lie at residues 53-56, 57-60, 61-64, 65-68, 69-72, and 73-76. Residues 53 to 76 form a 6 X 4 AA tandem repeats of G-G-S-A region; that stretch reads GGSAGGSAGGSAGGSAGGSAGGSA. Over residues 83 to 119 the composition is skewed to low complexity; that stretch reads GADAEGSSSTPATTTTTKTTTTTTTTNDAEASTSTSS. A compositionally biased stretch (basic and acidic residues) spans 122–137; sequence PNHKNAETNPKGKGEV. Polar residues-rich tracts occupy residues 139–165 and 172–200; these read EPNQANKETQNNSNVQQDSQTKSNVPP and KSPTAQPEQAENSAPTAEQTESPELQSAP. The N-linked (GlcNAc...) asparagine glycan is linked to Asn-149. Asn-221 carries an N-linked (GlcNAc...) asparagine glycan. Cysteines 229 and 237 form a disulfide. N-linked (GlcNAc...) asparagine glycans are attached at residues Asn-245 and Asn-246. A lipid anchor (GPI-anchor amidated asparagine) is attached at Asn-246. A propeptide spans 247-272 (removed in mature form); that stretch reads SSNIASINKFVVLISATLVLSFAIFI.

It localises to the cell membrane. May play a role in the merozoite attachment to the erythrocyte. The polypeptide is Merozoite surface protein 2 (Plasmodium falciparum (isolate 3D7)).